Here is a 695-residue protein sequence, read N- to C-terminus: N-terminal acetyltransferase A complex subunit-like protein C418.02 (695 aa).

TPR repeat units follow at residues 8-41, 43-75, 76-109, 111-143, 145-177, 217-250, 262-296, 365-398, 399-432, and 477-510; these read EAFL…KPKH, DSVA…DPKS, QFCW…SPNN, SLWY…DSSN, EYRL…CNLS, FNFE…FPNR, WNFY…GISV, LWCT…TPTY, PELF…DKSD, and VWFL…YKKW.

Component of the N-terminal acetyltransferase A (NatA) complex.

The protein localises to the cytoplasm. It is found in the nucleus. Non-catalytic component of the NatA N-terminal acetyltransferase, which catalyzes acetylation of proteins beginning with Met-Ser, Met-Gly and Met-Ala. N-acetylation plays a role in normal eukaryotic translation and processing, protect against proteolytic degradation and protein turnover. This is N-terminal acetyltransferase A complex subunit-like protein C418.02 from Schizosaccharomyces pombe (strain 972 / ATCC 24843) (Fission yeast).